A 161-amino-acid chain; its full sequence is uncharacterized protein (161 aa).

A helical transmembrane segment spans residues 30–50 (GVILFRLLGVILFRLLGVILF).

Its subcellular location is the membrane. This is an uncharacterized protein from Homo sapiens (Human).